Reading from the N-terminus, the 317-residue chain is Transaldolase (317 aa).

The active-site Schiff-base intermediate with substrate is the Lys-126.

The protein belongs to the transaldolase family. Type 1 subfamily. As to quaternary structure, homodimer.

The protein localises to the cytoplasm. It catalyses the reaction D-sedoheptulose 7-phosphate + D-glyceraldehyde 3-phosphate = D-erythrose 4-phosphate + beta-D-fructose 6-phosphate. It participates in carbohydrate degradation; pentose phosphate pathway; D-glyceraldehyde 3-phosphate and beta-D-fructose 6-phosphate from D-ribose 5-phosphate and D-xylulose 5-phosphate (non-oxidative stage): step 2/3. In terms of biological role, transaldolase is important for the balance of metabolites in the pentose-phosphate pathway. This Burkholderia multivorans (strain ATCC 17616 / 249) protein is Transaldolase.